The chain runs to 222 residues: Beta-casein (222 aa).

Positions 1-15 (MKVLILACLVALAIA) are cleaved as a signal peptide. Threonine 27 carries the phosphothreonine modification. Phosphoserine is present on residues serine 30, serine 32, serine 33, and serine 34.

It belongs to the beta-casein family. In terms of tissue distribution, mammary gland specific. Secreted in milk.

Its subcellular location is the secreted. Important role in determination of the surface properties of the casein micelles. The polypeptide is Beta-casein (CSN2) (Capra hircus (Goat)).